Consider the following 468-residue polypeptide: Phosphoglucosamine mutase (468 aa).

Catalysis depends on Ser-112, which acts as the Phosphoserine intermediate. Ser-112, Asp-254, Asp-256, and Asp-258 together coordinate Mg(2+). Ser-112 carries the phosphoserine modification.

It belongs to the phosphohexose mutase family. The cofactor is Mg(2+). Post-translationally, activated by phosphorylation.

It carries out the reaction alpha-D-glucosamine 1-phosphate = D-glucosamine 6-phosphate. Its function is as follows. Catalyzes the conversion of glucosamine-6-phosphate to glucosamine-1-phosphate. This is Phosphoglucosamine mutase from Prochlorococcus marinus (strain MIT 9313).